The chain runs to 159 residues: Peptide methionine sulfoxide reductase MsrB (159 aa).

Positions Thr14–Lys137 constitute a MsrB domain. Cys126 (nucleophile) is an active-site residue.

Belongs to the MsrB Met sulfoxide reductase family.

It catalyses the reaction L-methionyl-[protein] + [thioredoxin]-disulfide + H2O = L-methionyl-(R)-S-oxide-[protein] + [thioredoxin]-dithiol. The sequence is that of Peptide methionine sulfoxide reductase MsrB from Hathewaya histolytica (Clostridium histolyticum).